We begin with the raw amino-acid sequence, 489 residues long: Zinc finger protein 772 (489 aa).

The 72-residue stretch at 27–98 folds into the KRAB domain; it reads VNFEDVFVYF…DWVDMTLAVA (72 aa). 10 consecutive C2H2-type zinc fingers follow at residues 144 to 166, 172 to 194, 266 to 288, 294 to 316, 322 to 344, 350 to 372, 378 to 400, 406 to 428, 434 to 456, and 462 to 484; these read YPCGTCGLVLKDILHLAEHQETH, YMCVLCGKQFCFSANLHQHQKQH, YKCSECGKTFSRKDSLVQHQRVH, YECGECGKTFSRKPILAQHQRIH, YECGICGKVFNHSSNLIVHQRVH, YKCSECGKAYSHKSTLVQHESIH, YECSECGKYFGHKYRLIKHWSVH, YECIACGKFFSQSSDLIAHQRVH, YVCSECGKAFSHKHVLVQHHRIH, and YKCSECGKAFRQRASLIRHWKIH.

It belongs to the krueppel C2H2-type zinc-finger protein family.

The protein localises to the nucleus. Its function is as follows. May be involved in transcriptional regulation. The sequence is that of Zinc finger protein 772 (ZNF772) from Homo sapiens (Human).